The following is a 577-amino-acid chain: Arginine--tRNA ligase (577 aa).

Positions 122 to 132 (PNVAKEMHVGH) match the 'HIGH' region motif.

It belongs to the class-I aminoacyl-tRNA synthetase family. Monomer.

The protein resides in the cytoplasm. The enzyme catalyses tRNA(Arg) + L-arginine + ATP = L-arginyl-tRNA(Arg) + AMP + diphosphate. The chain is Arginine--tRNA ligase from Shigella flexneri serotype 5b (strain 8401).